The sequence spans 572 residues: Phosphoenolpyruvate-protein phosphotransferase (572 aa).

Histidine 190 acts as the Tele-phosphohistidine intermediate in catalysis. Positions 297 and 333 each coordinate phosphoenolpyruvate. Mg(2+) is bound by residues glutamate 432 and aspartate 456. Residues 455 to 456 (ND) and arginine 466 contribute to the phosphoenolpyruvate site. Cysteine 503 acts as the Proton donor in catalysis.

It belongs to the PEP-utilizing enzyme family. In terms of assembly, homodimer. Requires Mg(2+) as cofactor.

The protein resides in the cytoplasm. It catalyses the reaction L-histidyl-[protein] + phosphoenolpyruvate = N(pros)-phospho-L-histidyl-[protein] + pyruvate. Its function is as follows. General (non sugar-specific) component of the phosphoenolpyruvate-dependent sugar phosphotransferase system (sugar PTS). This major carbohydrate active-transport system catalyzes the phosphorylation of incoming sugar substrates concomitantly with their translocation across the cell membrane. Enzyme I transfers the phosphoryl group from phosphoenolpyruvate (PEP) to the phosphoryl carrier protein (HPr). The polypeptide is Phosphoenolpyruvate-protein phosphotransferase (ptsI) (Listeria innocua serovar 6a (strain ATCC BAA-680 / CLIP 11262)).